We begin with the raw amino-acid sequence, 159 residues long: 2-C-methyl-D-erythritol 2,4-cyclodiphosphate synthase (159 aa).

A divalent metal cation contacts are provided by D8 and H10. Residues 8–10 and 34–35 contribute to the 4-CDP-2-C-methyl-D-erythritol 2-phosphate site; these read DVH and HS. An a divalent metal cation-binding site is contributed by H42. 4-CDP-2-C-methyl-D-erythritol 2-phosphate is bound by residues 56 to 58, 61 to 65, 100 to 106, 132 to 135, F139, and R142; these read DIG, FPDTD, AQAPKML, and TTTE.

Belongs to the IspF family. Homotrimer. A divalent metal cation serves as cofactor.

It carries out the reaction 4-CDP-2-C-methyl-D-erythritol 2-phosphate = 2-C-methyl-D-erythritol 2,4-cyclic diphosphate + CMP. It participates in isoprenoid biosynthesis; isopentenyl diphosphate biosynthesis via DXP pathway; isopentenyl diphosphate from 1-deoxy-D-xylulose 5-phosphate: step 4/6. In terms of biological role, involved in the biosynthesis of isopentenyl diphosphate (IPP) and dimethylallyl diphosphate (DMAPP), two major building blocks of isoprenoid compounds. Catalyzes the conversion of 4-diphosphocytidyl-2-C-methyl-D-erythritol 2-phosphate (CDP-ME2P) to 2-C-methyl-D-erythritol 2,4-cyclodiphosphate (ME-CPP) with a corresponding release of cytidine 5-monophosphate (CMP). The chain is 2-C-methyl-D-erythritol 2,4-cyclodiphosphate synthase from Klebsiella pneumoniae subsp. pneumoniae (strain ATCC 700721 / MGH 78578).